The chain runs to 810 residues: RING finger protein unkempt homolog (810 aa).

A disordered region spans residues 1–24; that stretch reads MSKGPGPGGSAASSAPPAATAQVL. Residues 10–19 are compositionally biased toward low complexity; it reads SAASSAPPAA. 5 C3H1-type zinc fingers span residues 84–113, 124–154, 215–241, 251–285, and 293–321; these read YSPDVYCTKYDEATGLCPEGDECPFLHRTT, YYKTGICIHETDSKGNCTKNGLHCAFAHGPH, NYKTEPCKKPPRLCRQGYACPYYHNSK, KYRSSPCPNVKHGDEWGDPGKCENGDACQYCHTRT, and IYKSTKCNDMQQSGSCPRGPFCAFAHVEQ. The interval 239–265 is disordered; sequence NSKDRRRSPRKHKYRSSPCPNVKHGDE. Residue serine 240 is modified to Phosphoserine. Residues 241–253 are compositionally biased toward basic residues; that stretch reads KDRRRSPRKHKYR. The tract at residues 324 to 343 is disordered; the sequence is LSDDLQPSSTVSSPTQPGPV. The segment covering 329–343 has biased composition (low complexity); the sequence is QPSSTVSSPTQPGPV. Serine 374, serine 378, and serine 385 each carry phosphoserine. The span at 569 to 585 shows a compositional bias: low complexity; it reads SASFHSASPSPPVSLSS. The segment at 569-602 is disordered; that stretch reads SASFHSASPSPPVSLSSHFLQQPQGHLSQSENTF. The span at 586-602 shows a compositional bias: polar residues; the sequence is HFLQQPQGHLSQSENTF. Serine 631 carries the post-translational modification Phosphoserine. A coiled-coil region spans residues 643 to 723; that stretch reads GAAELARLRQ…QEELERLHSG (81 aa). An RING-type; degenerate zinc finger spans residues 766–801; the sequence is SVKCLKCQEQNRAVLPCQHAVLCELCAEGSECPVCQ.

The protein belongs to the unkempt family.

It is found in the cytoplasm. Functionally, sequence-specific RNA-binding protein which plays an important role in the establishment and maintenance of the early morphology of cortical neurons during embryonic development. Acts as a translation repressor and controls a translationally regulated cell morphology program to ensure proper structuring of the nervous system. Translational control depends on recognition of its binding element within target mRNAs which consists of a mandatory UAG trimer upstream of a U/A-rich motif. Associated with polysomes. This is RING finger protein unkempt homolog (UNK) from Canis lupus familiaris (Dog).